The sequence spans 312 residues: uncharacterized protein (312 aa).

Active-site charge relay system residues include Ser200, Asp261, and His292.

It belongs to the AB hydrolase superfamily. AB hydrolase 2 family.

This is an uncharacterized protein from Acanthamoeba polyphaga mimivirus (APMV).